The primary structure comprises 654 residues: Probable potassium transport system protein Kup (654 aa).

13 consecutive transmembrane segments (helical) span residues 17-37 (GILVTLGIIYGDIGTSPLYVM), 40-60 (IIGLHTIKPEVVLGGISAIFW), 71-91 (VLITLSADNHGEGGIFALYAL), 99-119 (WLIIPAIIGGSALLADGIITP), 137-157 (INTVPIVIAILVVLFTIQQFG), 164-184 (FFAPMMMIWFAMLAILGILQI), 202-222 (LLSIHPDGFYVLGFVFLCTTG), 240-260 (ISWIFVKIALLLNYFGQGAYL), 281-301 (LVMPEWFQPFGIVISTMAAVI), 338-358 (IYIPSINWLLLAGCIGIVLHF), 369-389 (GLAIVLCMIMTTILLTYFMIL), 394-414 (WFIIAPLILLYLVIEFSFLIA), and 423-443 (GYVTLIIASALTFIMSIWYTA).

The protein belongs to the HAK/KUP transporter (TC 2.A.72) family.

The protein resides in the cell inner membrane. It carries out the reaction K(+)(in) + H(+)(in) = K(+)(out) + H(+)(out). Its function is as follows. Transport of potassium into the cell. Likely operates as a K(+):H(+) symporter. This Flavobacterium psychrophilum (strain ATCC 49511 / DSM 21280 / CIP 103535 / JIP02/86) protein is Probable potassium transport system protein Kup.